The primary structure comprises 690 residues: Protein hook (690 aa).

Residues Met-6–Ala-122 enclose the Calponin-homology (CH) domain. Coiled-coil stretches lie at residues Gln-134 to Glu-515 and Glu-546 to Asp-577.

Belongs to the hook family. As to quaternary structure, homodimer. Interacts with microtubules via its N-terminus.

The protein resides in the cytoplasm. Its subcellular location is the cytoskeleton. It localises to the endosome. In terms of biological role, involved in endocytic trafficking. Probably acts as a cytoskeletal linker protein that tethers endosome vesicles to the cytoskeleton. The polypeptide is Protein hook (Anopheles gambiae (African malaria mosquito)).